The chain runs to 853 residues: DNA mismatch repair protein MutS (853 aa).

ATP is bound at residue 614–621; that stretch reads GPNMGGKS.

The protein belongs to the DNA mismatch repair MutS family.

In terms of biological role, this protein is involved in the repair of mismatches in DNA. It is possible that it carries out the mismatch recognition step. This protein has a weak ATPase activity. The protein is DNA mismatch repair protein MutS of Shigella dysenteriae serotype 1 (strain Sd197).